We begin with the raw amino-acid sequence, 467 residues long: MTNWLQKRVRLSPGETALVFEGKQETFEEIYEAVEKLAGKLFARGIRKDEMVALLGKNDRMTFLLIHALQQLGAITLFLNNRLTKKEITFQLANAEVKQVIVADAFVDKVTSGISYEELQQTTYVEPDLCKTWDLSRTASVMYTSGTTGKPKGVMQTYENHWWSAVSSVLNLGLTEKDSWLCAVPIFHISGLSIMMRSVIYGIPVYLEEHFDEEKITQLLESGKISTISVVTSMLERLLKIQGGSYHPNVRTVLLGGGPANKAVLEICKQRDIPLVQSFGMTETASQIVTLPPKDALNKIGSSGKALFPAEVKIADDGEILLKGPSITPGYLHNEKATAKAFIDGWFKTGDIGYLDEEGFLFVLERRSDLIISGGENIYPTEIEHVIGAYEAVEEVAVVGKSDAKWGSVPVAFIVVNEGFDEGVLKDICQTNLASFKIPKQITIVEHLPKTASGKIQRNKLKERHSN.

Belongs to the ATP-dependent AMP-binding enzyme family. MenE subfamily.

It carries out the reaction 2-succinylbenzoate + ATP + CoA = 2-succinylbenzoyl-CoA + AMP + diphosphate. The protein operates within quinol/quinone metabolism; 1,4-dihydroxy-2-naphthoate biosynthesis; 1,4-dihydroxy-2-naphthoate from chorismate: step 5/7. It participates in quinol/quinone metabolism; menaquinone biosynthesis. Converts 2-succinylbenzoate (OSB) to 2-succinylbenzoyl-CoA (OSB-CoA). This Listeria innocua serovar 6a (strain ATCC BAA-680 / CLIP 11262) protein is 2-succinylbenzoate--CoA ligase.